The following is a 531-amino-acid chain: Ribosomal protein uS12 methylthiotransferase RimO (531 aa).

Polar residues-rich tracts occupy residues 1 to 19 (MPNI…SQPA) and 55 to 67 (HNQN…SSEV). The tract at residues 1 to 77 (MPNISTESVN…VSAASAKTTT (77 aa)) is disordered. Over residues 68 to 77 (VSAASAKTTT) the composition is skewed to low complexity. In terms of domain architecture, MTTase N-terminal spans 88-198 (PKIGFVSLGC…VIRAVALHVP (111 aa)). [4Fe-4S] cluster is bound by residues C97, C133, C162, C236, C240, and C243. A Radical SAM core domain is found at 222–459 (LTPSHYAYLK…MTLQQDISAQ (238 aa)). One can recognise a TRAM domain in the interval 462–531 (QEKIGKTLMV…EYDLFASYKG (70 aa)).

Belongs to the methylthiotransferase family. RimO subfamily. [4Fe-4S] cluster is required as a cofactor.

The protein resides in the cytoplasm. It catalyses the reaction L-aspartate(89)-[ribosomal protein uS12]-hydrogen + (sulfur carrier)-SH + AH2 + 2 S-adenosyl-L-methionine = 3-methylsulfanyl-L-aspartate(89)-[ribosomal protein uS12]-hydrogen + (sulfur carrier)-H + 5'-deoxyadenosine + L-methionine + A + S-adenosyl-L-homocysteine + 2 H(+). Catalyzes the methylthiolation of an aspartic acid residue of ribosomal protein uS12. The sequence is that of Ribosomal protein uS12 methylthiotransferase RimO from Psychrobacter cryohalolentis (strain ATCC BAA-1226 / DSM 17306 / VKM B-2378 / K5).